A 470-amino-acid chain; its full sequence is 6-phospho-beta-galactosidase (470 aa).

D-galactose 6-phosphate is bound by residues Gln19, His116, Asn159, Glu160, and Asn297. Glu160 (proton donor) is an active-site residue. The active-site Nucleophile is the Glu375. D-galactose 6-phosphate contacts are provided by Ser430, Trp431, Lys437, and Tyr439.

It belongs to the glycosyl hydrolase 1 family.

The catalysed reaction is a 6-phospho-beta-D-galactoside + H2O = D-galactose 6-phosphate + an alcohol. The protein operates within carbohydrate metabolism; lactose degradation; D-galactose 6-phosphate and beta-D-glucose from lactose 6-phosphate: step 1/1. The sequence is that of 6-phospho-beta-galactosidase from Staphylococcus aureus (strain MRSA252).